Consider the following 337-residue polypeptide: Nucleoid-associated protein Avin_11450 (337 aa).

It belongs to the YejK family.

It localises to the cytoplasm. The protein resides in the nucleoid. This Azotobacter vinelandii (strain DJ / ATCC BAA-1303) protein is Nucleoid-associated protein Avin_11450.